Consider the following 68-residue polypeptide: Neuronal regeneration-related protein (68 aa).

The interval 22–54 is disordered; the sequence is EGRLPKGRLPVPKEVNRKKNDETNAASLTPLGS. A compositionally biased stretch (polar residues) spans 44–54; it reads TNAASLTPLGS. Phosphoserine is present on Ser-59.

Interacts with the latency-associated peptides (LAP) of TGFB1 and TGFB2; the interaction results in a decrease in TGFB autoinduction. Interacts with FLNA. Post-translationally, phosphorylated on Ser-59. Phosphorylation decreases stability and activity. In terms of tissue distribution, expressed in lung (at protein level).

Its subcellular location is the cytoplasm. In terms of biological role, may have roles in neural function. Ectopic expression augments motility of gliomas. Also promotes axonal regeneration. May also have functions in cellular differentiation. Induces differentiation of fibroblast into myofibroblast and myofibroblast ameboid migration. Increases retinoic-acid regulation of lipid-droplet biogenesis. Down-regulates the expression of TGFB1 and TGFB2 but not of TGFB3. May play a role in the regulation of alveolar generation. The polypeptide is Neuronal regeneration-related protein (NREP) (Homo sapiens (Human)).